Reading from the N-terminus, the 172-residue chain is Adenine phosphoribosyltransferase (172 aa).

Belongs to the purine/pyrimidine phosphoribosyltransferase family. In terms of assembly, homodimer.

The protein localises to the cytoplasm. The catalysed reaction is AMP + diphosphate = 5-phospho-alpha-D-ribose 1-diphosphate + adenine. It functions in the pathway purine metabolism; AMP biosynthesis via salvage pathway; AMP from adenine: step 1/1. Catalyzes a salvage reaction resulting in the formation of AMP, that is energically less costly than de novo synthesis. This is Adenine phosphoribosyltransferase from Streptococcus pyogenes serotype M12 (strain MGAS9429).